Consider the following 328-residue polypeptide: MGHQNHTFSSDFILLGLFSSSPTSVVFFLVLFVIFIMSVTENTLMILLIRSDSRLHTPMYFLLSHLSLMDILHVSNIVPKMVTNFLSGSRTISFAGCGFQVFLSLTLLGGECLLLAAMSCDRYVAICHPLRYPILMKEYASALMAGGSWLIGVFNSTVHTAYALQFPFCGSRAIDHFFCEVPAMLKLSCADTTRYERGVCVSAVIFLLIPFSLISASYGQIILTVLQMKSSEARKKSFSTCSFHMIVVTMYYGPFIFTYMRPKSYHTPGQDKFLAIFYTILTPTLNPFIYSFRNKDVLAVMKNMLKSNFLHKKMNRKIPECVFCLFLC.

At 1-25 (MGHQNHTFSSDFILLGLFSSSPTSV) the chain is on the extracellular side. N-linked (GlcNAc...) asparagine glycosylation is present at Asn5. The helical transmembrane segment at 26–49 (VFFLVLFVIFIMSVTENTLMILLI) threads the bilayer. The Cytoplasmic portion of the chain corresponds to 50-57 (RSDSRLHT). The helical transmembrane segment at 58-79 (PMYFLLSHLSLMDILHVSNIVP) threads the bilayer. Residues 80-100 (KMVTNFLSGSRTISFAGCGFQ) are Extracellular-facing. Cys97 and Cys189 form a disulfide bridge. A helical transmembrane segment spans residues 101 to 120 (VFLSLTLLGGECLLLAAMSC). Over 121–139 (DRYVAICHPLRYPILMKEY) the chain is Cytoplasmic. Residues 140-158 (ASALMAGGSWLIGVFNSTV) form a helical membrane-spanning segment. Residues 159 to 195 (HTAYALQFPFCGSRAIDHFFCEVPAMLKLSCADTTRY) lie on the Extracellular side of the membrane. A helical transmembrane segment spans residues 196–219 (ERGVCVSAVIFLLIPFSLISASYG). The Cytoplasmic segment spans residues 220-236 (QIILTVLQMKSSEARKK). Residues 237–259 (SFSTCSFHMIVVTMYYGPFIFTY) traverse the membrane as a helical segment. Residues 260–272 (MRPKSYHTPGQDK) are Extracellular-facing. The chain crosses the membrane as a helical span at residues 273–292 (FLAIFYTILTPTLNPFIYSF). At 293-328 (RNKDVLAVMKNMLKSNFLHKKMNRKIPECVFCLFLC) the chain is on the cytoplasmic side.

The protein belongs to the G-protein coupled receptor 1 family.

It is found in the cell membrane. Functionally, odorant receptor. The protein is Olfactory receptor 2AJ1 (OR2AJ1) of Homo sapiens (Human).